The following is a 745-amino-acid chain: 1,4-alpha-glucan branching enzyme GlgB (745 aa).

The Nucleophile role is filled by Asp416. The active-site Proton donor is Glu469.

It belongs to the glycosyl hydrolase 13 family. GlgB subfamily. As to quaternary structure, monomer.

The enzyme catalyses Transfers a segment of a (1-&gt;4)-alpha-D-glucan chain to a primary hydroxy group in a similar glucan chain.. Its pathway is glycan biosynthesis; glycogen biosynthesis. Functionally, catalyzes the formation of the alpha-1,6-glucosidic linkages in glycogen by scission of a 1,4-alpha-linked oligosaccharide from growing alpha-1,4-glucan chains and the subsequent attachment of the oligosaccharide to the alpha-1,6 position. This chain is 1,4-alpha-glucan branching enzyme GlgB, found in Shewanella sp. (strain MR-4).